A 197-amino-acid chain; its full sequence is Na(+)-translocating NADH-quinone reductase subunit E (197 aa).

Helical transmembrane passes span 11-31 (SVFI…FLAV), 35-55 (VSTA…SVPV), 76-96 (FLKF…LEMF), 108-128 (LGIY…VSFM), 139-159 (VVYG…LAGI), and 175-195 (LGIT…FSGI).

This sequence belongs to the NqrDE/RnfAE family. As to quaternary structure, composed of six subunits; NqrA, NqrB, NqrC, NqrD, NqrE and NqrF.

Its subcellular location is the cell inner membrane. It carries out the reaction a ubiquinone + n Na(+)(in) + NADH + H(+) = a ubiquinol + n Na(+)(out) + NAD(+). In terms of biological role, NQR complex catalyzes the reduction of ubiquinone-1 to ubiquinol by two successive reactions, coupled with the transport of Na(+) ions from the cytoplasm to the periplasm. NqrA to NqrE are probably involved in the second step, the conversion of ubisemiquinone to ubiquinol. This is Na(+)-translocating NADH-quinone reductase subunit E from Neisseria meningitidis serogroup B (strain ATCC BAA-335 / MC58).